A 248-amino-acid polypeptide reads, in one-letter code: MRSSGRKKEQIRPVKITRNFTKYAEGSVLIEVGDTKVLCTASIEEKVPPFLKGSGEGWITAEYNMLPRSTQSRKQRDINKLKIDGRTMEIQRLIGRALRSAVDMKALGEKTIWIDCDVLQADGGTRTTSITGSFVALVDAVNKLHQKKPFNVYPIRHFVSAVSVGIVGEEKILDLCYEEDHVAKVDMNVVMTEEGEFIEIQGTGEAGPFSRKELDELLNLAEKGAKQMIQAQKDALKTDSLWIGTGRE.

Residues Arg-86 and 124–126 (GTR) contribute to the phosphate site.

The protein belongs to the RNase PH family. As to quaternary structure, homohexameric ring arranged as a trimer of dimers.

It catalyses the reaction tRNA(n+1) + phosphate = tRNA(n) + a ribonucleoside 5'-diphosphate. Its function is as follows. Phosphorolytic 3'-5' exoribonuclease that plays an important role in tRNA 3'-end maturation. Removes nucleotide residues following the 3'-CCA terminus of tRNAs; can also add nucleotides to the ends of RNA molecules by using nucleoside diphosphates as substrates, but this may not be physiologically important. Probably plays a role in initiation of 16S rRNA degradation (leading to ribosome degradation) during starvation. The chain is Ribonuclease PH from Clostridium perfringens (strain 13 / Type A).